The chain runs to 860 residues: Leucine--tRNA ligase (860 aa).

The 'HIGH' region motif lies at 42–52; sequence PYPSGRLHMGH. A 'KMSKS' region motif is present at residues 619–623; it reads KMSKS. Residue Lys622 participates in ATP binding.

The protein belongs to the class-I aminoacyl-tRNA synthetase family.

It localises to the cytoplasm. It catalyses the reaction tRNA(Leu) + L-leucine + ATP = L-leucyl-tRNA(Leu) + AMP + diphosphate. In Escherichia coli O17:K52:H18 (strain UMN026 / ExPEC), this protein is Leucine--tRNA ligase.